A 517-amino-acid polypeptide reads, in one-letter code: GTPase Obg (517 aa).

Positions 2 to 159 (ATFVDTVTLH…GDVVLELKVV (158 aa)) constitute an Obg domain. The OBG-type G domain occupies 160–336 (ADVALVGYPS…LSFALAELVK (177 aa)). GTP contacts are provided by residues 166–173 (GYPSAGKS), 191–195 (FTTLH), 212–215 (DVPG), 288–291 (NKID), and 317–319 (STV). Mg(2+) is bound by residues serine 173 and threonine 193. The 85-residue stretch at 355-439 (PRAVDEKPFT…GDGVVFDWEP (85 aa)) folds into the OCT domain. Positions 490–517 (EGEAGLWADEDGTGQDGTDEDATTDAKA) are disordered. The segment covering 497–517 (ADEDGTGQDGTDEDATTDAKA) has biased composition (acidic residues).

The protein belongs to the TRAFAC class OBG-HflX-like GTPase superfamily. OBG GTPase family. In terms of assembly, monomer. Mg(2+) is required as a cofactor.

The protein resides in the cytoplasm. Functionally, an essential GTPase which binds GTP, GDP and possibly (p)ppGpp with moderate affinity, with high nucleotide exchange rates and a fairly low GTP hydrolysis rate. Plays a role in control of the cell cycle, stress response, ribosome biogenesis and in those bacteria that undergo differentiation, in morphogenesis control. This is GTPase Obg from Clavibacter sepedonicus (Clavibacter michiganensis subsp. sepedonicus).